The primary structure comprises 505 residues: Flagellin (505 aa).

The protein belongs to the bacterial flagellin family.

It is found in the secreted. The protein localises to the bacterial flagellum. Functionally, flagellin is the subunit protein which polymerizes to form the filaments of bacterial flagella. The protein is Flagellin (fliC) of Salmonella derby.